The primary structure comprises 365 residues: Peptide chain release factor 2 (365 aa).

Glutamine 252 bears the N5-methylglutamine mark.

This sequence belongs to the prokaryotic/mitochondrial release factor family. In terms of processing, methylated by PrmC. Methylation increases the termination efficiency of RF2.

The protein localises to the cytoplasm. In terms of biological role, peptide chain release factor 2 directs the termination of translation in response to the peptide chain termination codons UGA and UAA. In Yersinia enterocolitica serotype O:8 / biotype 1B (strain NCTC 13174 / 8081), this protein is Peptide chain release factor 2.